Here is a 209-residue protein sequence, read N- to C-terminus: Imidazole glycerol phosphate synthase subunit HisH (209 aa).

One can recognise a Glutamine amidotransferase type-1 domain in the interval Ala5–Asp209. Cys83 functions as the Nucleophile in the catalytic mechanism. Catalysis depends on residues His188 and Glu190.

As to quaternary structure, heterodimer of HisH and HisF.

It localises to the cytoplasm. It catalyses the reaction 5-[(5-phospho-1-deoxy-D-ribulos-1-ylimino)methylamino]-1-(5-phospho-beta-D-ribosyl)imidazole-4-carboxamide + L-glutamine = D-erythro-1-(imidazol-4-yl)glycerol 3-phosphate + 5-amino-1-(5-phospho-beta-D-ribosyl)imidazole-4-carboxamide + L-glutamate + H(+). The catalysed reaction is L-glutamine + H2O = L-glutamate + NH4(+). It participates in amino-acid biosynthesis; L-histidine biosynthesis; L-histidine from 5-phospho-alpha-D-ribose 1-diphosphate: step 5/9. Functionally, IGPS catalyzes the conversion of PRFAR and glutamine to IGP, AICAR and glutamate. The HisH subunit catalyzes the hydrolysis of glutamine to glutamate and ammonia as part of the synthesis of IGP and AICAR. The resulting ammonia molecule is channeled to the active site of HisF. This Thermosynechococcus vestitus (strain NIES-2133 / IAM M-273 / BP-1) protein is Imidazole glycerol phosphate synthase subunit HisH.